The sequence spans 165 residues: Ribosome maturation factor RimM (165 aa).

In terms of domain architecture, PRC barrel spans Glu94–Ile165.

The protein belongs to the RimM family. As to quaternary structure, binds ribosomal protein uS19.

It is found in the cytoplasm. Functionally, an accessory protein needed during the final step in the assembly of 30S ribosomal subunit, possibly for assembly of the head region. Essential for efficient processing of 16S rRNA. May be needed both before and after RbfA during the maturation of 16S rRNA. It has affinity for free ribosomal 30S subunits but not for 70S ribosomes. In Rickettsia felis (strain ATCC VR-1525 / URRWXCal2) (Rickettsia azadi), this protein is Ribosome maturation factor RimM.